A 1235-amino-acid polypeptide reads, in one-letter code: DNA polymerase catalytic subunit (1235 aa).

2 disordered regions span residues 640-692 (QGRF…TAGR) and 1098-1134 (ATAPGDEPAPPAALPCPAKRPRETPSHADPPGGASKP). Residues 650 to 661 (APKRPAAAREDE) show a composition bias toward basic and acidic residues. Residues 662-675 (ERPEEEGEDEDERE) show a composition bias toward acidic residues. Basic and acidic residues predominate over residues 676 to 691 (EGGGEREPEGARETAG).

Belongs to the DNA polymerase type-B family. In terms of assembly, forms a complex with the ssDNA-binding protein UL29, the DNA polymerase processivity factor, and the alkaline exonuclease. Interacts with the putative helicase-primase complex subunit UL8; this interaction may coordinate leading and lagging strand DNA synthesis at the replication fork.

It localises to the host nucleus. The catalysed reaction is DNA(n) + a 2'-deoxyribonucleoside 5'-triphosphate = DNA(n+1) + diphosphate. It catalyses the reaction Endonucleolytic cleavage to 5'-phosphomonoester.. Functionally, replicates viral genomic DNA. The replication complex is composed of six viral proteins: the DNA polymerase, processivity factor, primase, primase-associated factor, helicase, and ssDNA-binding protein. Additionally, the polymerase contains an intrinsic ribonuclease H (RNase H) activity that specifically degrades RNA/DNA heteroduplexes or duplex DNA substrates in the 5' to 3' direction. Therefore, it can catalyze the excision of the RNA primers that initiate the synthesis of Okazaki fragments at a replication fork during viral DNA replication. The sequence is that of DNA polymerase catalytic subunit from Human herpesvirus 1 (strain Angelotti) (HHV-1).